A 175-amino-acid chain; its full sequence is Ribosome maturation factor RimM (175 aa).

The region spanning 96 to 172 (PDTYYDHQLE…LIEIDPPDGL (77 aa)) is the PRC barrel domain.

This sequence belongs to the RimM family. Binds ribosomal protein uS19.

It is found in the cytoplasm. An accessory protein needed during the final step in the assembly of 30S ribosomal subunit, possibly for assembly of the head region. Essential for efficient processing of 16S rRNA. May be needed both before and after RbfA during the maturation of 16S rRNA. It has affinity for free ribosomal 30S subunits but not for 70S ribosomes. The chain is Ribosome maturation factor RimM from Mycolicibacterium paratuberculosis (strain ATCC BAA-968 / K-10) (Mycobacterium paratuberculosis).